A 462-amino-acid polypeptide reads, in one-letter code: 3-ketoacyl CoA thiolase 1, peroxisomal (462 aa).

A peroxisome-targeting transit peptide spans 1-34 (MEKAIQRQRVLLEHLQPIRHHTHDHSSSLTTSIC). The Acyl-thioester intermediate role is filled by C138. Catalysis depends on proton acceptor residues H393 and C425. G427 is a binding site for substrate.

Belongs to the thiolase-like superfamily. Thiolase family. As to quaternary structure, homodimer.

The protein resides in the peroxisome. It catalyses the reaction an acyl-CoA + acetyl-CoA = a 3-oxoacyl-CoA + CoA. The protein operates within aromatic compound metabolism. It participates in lipid metabolism; fatty acid metabolism. In terms of biological role, component of the floral volatile benzenoid/phenylpropanoid (FVBP) biosynthetic pathway. Thiolase that catalyzes the conversion of 3-oxo-3-phenylpropionyl-CoA (benzoylacetyl-CoA) to benzoyl-CoA. The protein is 3-ketoacyl CoA thiolase 1, peroxisomal of Petunia hybrida (Petunia).